The primary structure comprises 311 residues: Mediator of RNA polymerase II transcription subunit 27 (311 aa).

The residue at position 132 (S132) is a Phosphoserine. At K134 the chain carries N6-methyllysine.

Belongs to the Mediator complex subunit 27 family. As to quaternary structure, component of the Mediator complex, which is composed of MED1, MED4, MED6, MED7, MED8, MED9, MED10, MED11, MED12, MED13, MED13L, MED14, MED15, MED16, MED17, MED18, MED19, MED20, MED21, MED22, MED23, MED24, MED25, MED26, MED27, MED29, MED30, MED31, CCNC, CDK8 and CDC2L6/CDK11. The MED12, MED13, CCNC and CDK8 subunits form a distinct module termed the CDK8 module. Mediator containing the CDK8 module is less active than Mediator lacking this module in supporting transcriptional activation. Individual preparations of the Mediator complex lacking one or more distinct subunits have been variously termed ARC, CRSP, DRIP, PC2, SMCC and TRAP.

The protein resides in the nucleus. Component of the Mediator complex, a coactivator involved in the regulated transcription of nearly all RNA polymerase II-dependent genes. Mediator functions as a bridge to convey information from gene-specific regulatory proteins to the basal RNA polymerase II transcription machinery. Mediator is recruited to promoters by direct interactions with regulatory proteins and serves as a scaffold for the assembly of a functional preinitiation complex with RNA polymerase II and the general transcription factors. This Homo sapiens (Human) protein is Mediator of RNA polymerase II transcription subunit 27 (MED27).